Reading from the N-terminus, the 214-residue chain is Ubiquitin-conjugating enzyme E2 21 (214 aa).

Residues 21–168 enclose the UBC core domain; that stretch reads ARVTRKCKEV…AVYWTSYFAN (148 aa). Residue Cys106 is the Glycyl thioester intermediate of the active site. A UBA domain is found at 172 to 214; it reads DVEPDFNRKVGRLIEMGIRETEAIVYLSCNNWKLEQALQFIFD.

The protein belongs to the ubiquitin-conjugating enzyme family.

It carries out the reaction S-ubiquitinyl-[E1 ubiquitin-activating enzyme]-L-cysteine + [E2 ubiquitin-conjugating enzyme]-L-cysteine = [E1 ubiquitin-activating enzyme]-L-cysteine + S-ubiquitinyl-[E2 ubiquitin-conjugating enzyme]-L-cysteine.. Its pathway is protein modification; protein ubiquitination. Functionally, acts with E3 ubiquitin-protein ligase trim-21 to catalyze the 'Lys-48'-linked polyubiquitination of ced-1, promoting its proteasomal degradation to maintain appropriate ced-1 levels for apoptotic cell clearance. The protein is Ubiquitin-conjugating enzyme E2 21 (ubc-21) of Caenorhabditis elegans.